Reading from the N-terminus, the 387-residue chain is 3-ketoacyl-CoA thiolase (387 aa).

The Acyl-thioester intermediate role is filled by cysteine 91. Active-site proton acceptor residues include histidine 343 and cysteine 373.

Belongs to the thiolase-like superfamily. Thiolase family. In terms of assembly, heterotetramer of two alpha chains (FadB) and two beta chains (FadA).

The protein resides in the cytoplasm. The catalysed reaction is an acyl-CoA + acetyl-CoA = a 3-oxoacyl-CoA + CoA. The protein operates within lipid metabolism; fatty acid beta-oxidation. Functionally, catalyzes the final step of fatty acid oxidation in which acetyl-CoA is released and the CoA ester of a fatty acid two carbons shorter is formed. This Klebsiella pneumoniae subsp. pneumoniae (strain ATCC 700721 / MGH 78578) protein is 3-ketoacyl-CoA thiolase.